Reading from the N-terminus, the 457-residue chain is MALSEDTIKAVEATAGLIAAQGIEFTRAFYERMLTKNEELKDIFNLAHQRTLRQPKALLDSLVAYALSIRRINELYELKGKDLPWTGHLAELQGFFSVAERVANKHTSVGIQPAQYQIVGAHLLATIEDRVTKDKAVLAAWGKAYEFLADLLIKREEEIYAETEGPEGGWRQTRTFRVEEKTRVNEVICRFRLVPAKGGASVVQHKPGQYLAIFVRNPELFQHQQIRQYSIMSAPNSAYYEIAVHKDGAGTVSRYLHDHVDTGDLLEVAPPYGDFFLRYLEAGEQTAADTQASSEFQMLQGRAVNFAAEKTAPIVLISGGIGQTPLLSMLRFLAQKEGRETARPIFWIHAAHDSRVRAFKEEVDAIREAALPSLRVVTFLSEVRATDREGEDYDFAGRINLDRIPELARLEAGHANPHYFFVGPTGFMTAVEEQLRARSVPDDRIHFEMFGPFKASH.

A Globin domain is found at 2-157 (ALSEDTIKAV…LADLLIKREE (156 aa)). H106 contributes to the heme b binding site. Residues Y116 and E156 each act as charge relay system in the active site. The reductase stretch occupies residues 168–456 (GGWRQTRTFR…FEMFGPFKAS (289 aa)). The region spanning 171 to 278 (RQTRTFRVEE…APPYGDFFLR (108 aa)) is the FAD-binding FR-type domain. FAD contacts are provided by residues Y210 and 227–230 (RQYS). NADP(+) is bound at residue 320-325 (GIGQTP). 449-452 (MFGP) provides a ligand contact to FAD.

The protein belongs to the globin family. Two-domain flavohemoproteins subfamily. It in the C-terminal section; belongs to the flavoprotein pyridine nucleotide cytochrome reductase family. As to quaternary structure, monomer. Heme b is required as a cofactor. The cofactor is FAD.

It carries out the reaction 2 nitric oxide + NADPH + 2 O2 = 2 nitrate + NADP(+) + H(+). The enzyme catalyses 2 nitric oxide + NADH + 2 O2 = 2 nitrate + NAD(+) + H(+). Functionally, flavohemoprotein involved in nitric oxide (NO) detoxification in an aerobic process, termed nitric oxide dioxygenase (NOD) reaction that utilizes O(2) and NAD(P)H to convert NO to nitrate, which protects the protozoan parasite from various noxious nitrogen compounds. Therefore, plays a central role in the inducible response to nitrosative stress. May also be involved in O(2) detoxification. In Giardia intestinalis (strain P15) (Giardia lamblia), this protein is Flavohemoprotein-2 (hmpA-2).